A 273-amino-acid chain; its full sequence is Ribosomal RNA small subunit methyltransferase A (273 aa).

Residues asparagine 18, leucine 20, glycine 45, glutamate 66, aspartate 91, and asparagine 113 each contribute to the S-adenosyl-L-methionine site.

Belongs to the class I-like SAM-binding methyltransferase superfamily. rRNA adenine N(6)-methyltransferase family. RsmA subfamily.

It is found in the cytoplasm. It catalyses the reaction adenosine(1518)/adenosine(1519) in 16S rRNA + 4 S-adenosyl-L-methionine = N(6)-dimethyladenosine(1518)/N(6)-dimethyladenosine(1519) in 16S rRNA + 4 S-adenosyl-L-homocysteine + 4 H(+). Specifically dimethylates two adjacent adenosines (A1518 and A1519) in the loop of a conserved hairpin near the 3'-end of 16S rRNA in the 30S particle. May play a critical role in biogenesis of 30S subunits. This Escherichia coli (strain 55989 / EAEC) protein is Ribosomal RNA small subunit methyltransferase A.